A 115-amino-acid polypeptide reads, in one-letter code: Large ribosomal subunit protein bL31B (115 aa).

The protein belongs to the bacterial ribosomal protein bL31 family. Type B subfamily. As to quaternary structure, part of the 50S ribosomal subunit.

The sequence is that of Large ribosomal subunit protein bL31B from Polynucleobacter asymbioticus (strain DSM 18221 / CIP 109841 / QLW-P1DMWA-1) (Polynucleobacter necessarius subsp. asymbioticus).